Reading from the N-terminus, the 273-residue chain is Phycobilisome 32.1 kDa linker polypeptide, phycocyanin-associated, rod 2 (273 aa).

Residues 1 to 180 enclose the PBS-linker domain; sequence MTSLVSAQRL…VYRGYATSDR (180 aa). The CpcD-like domain maps to 220–273; sequence NQMYRLQVIQGAAPGRGTRVRRGKAEYLVSYDNLSAKLQQINRQGDTVTMISLA.

Belongs to the phycobilisome linker protein family. Part of 2 PBS rod complexes, the conventional CpcG-PBS rod and a photosystem I-specific CpcL-PBS rod, both of which include ferredoxin--NADP reductase (petH). CpcG-PBS has on average 3 stacked phycocyanin hexamers (PC, CpcA and CpcB). Linker CpcG connects the PC stack to the thylakoid, the hexamers are linked by 1 copy of CpcC1, 1 copy of CpcC2 and the stack is terminated by a single copy of CpcD. The CpcL-PBS has on average 5 stacked phycocyanin hexamers (PC, CpcA and CpcB). Linker CpcL connects the PC stack to the thylakoid, the hexamers are linked by 1 copy of CpcC1, 3 copies of CpcC2 and the stack is terminated by a single copy of CpcD. Interacts with the C-phycocyanin (PC) beta subunit (cpcB), it may fit into the center of the PC hexamer.

The protein localises to the cellular thylakoid membrane. In terms of biological role, rod linker protein, associated with phycocyanin. Linker polypeptides determine the state of aggregation and the location of the disk-shaped phycobiliprotein units within the phycobilisome and modulate their spectroscopic properties in order to mediate a directed and optimal energy transfer. This chain is Phycobilisome 32.1 kDa linker polypeptide, phycocyanin-associated, rod 2 (cpcC2), found in Synechocystis sp. (strain ATCC 27184 / PCC 6803 / Kazusa).